The sequence spans 301 residues: Large ribosomal subunit protein uL18y (301 aa).

Positions 247-267 (RAEPNHKKTEKSAPKEHKRYN) are disordered. Basic and acidic residues predominate over residues 249-261 (EPNHKKTEKSAPK).

This sequence belongs to the universal ribosomal protein uL18 family. As to quaternary structure, component of the large ribosomal subunit (LSU).

The protein localises to the cytoplasm. It localises to the nucleus. The protein resides in the nucleolus. Its subcellular location is the nucleoplasm. Component of the ribosome, a large ribonucleoprotein complex responsible for the synthesis of proteins in the cell. The small ribosomal subunit (SSU) binds messenger RNAs (mRNAs) and translates the encoded message by selecting cognate aminoacyl-transfer RNA (tRNA) molecules. The large subunit (LSU) contains the ribosomal catalytic site termed the peptidyl transferase center (PTC), which catalyzes the formation of peptide bonds, thereby polymerizing the amino acids delivered by tRNAs into a polypeptide chain. The nascent polypeptides leave the ribosome through a tunnel in the LSU and interact with protein factors that function in enzymatic processing, targeting, and the membrane insertion of nascent chains at the exit of the ribosomal tunnel. Seems involved in the regulation of cell proliferation. Essential in leaf polarity establishment, probably having a role for translation in leaf dorsoventral patterning to specify leaf adaxial identity. The protein is Large ribosomal subunit protein uL18y of Arabidopsis thaliana (Mouse-ear cress).